Consider the following 264-residue polypeptide: Phosphonates import ATP-binding protein PhnC (264 aa).

In terms of domain architecture, ABC transporter spans 3–246 (IRLQEAGLRH…MLDALYANEQ (244 aa)). 35-42 (GPSGAGKS) is an ATP binding site.

This sequence belongs to the ABC transporter superfamily. Phosphonates importer (TC 3.A.1.9.1) family. As to quaternary structure, the complex is composed of two ATP-binding proteins (PhnC), two transmembrane proteins (PhnE) and a solute-binding protein (PhnD).

Its subcellular location is the cell inner membrane. The enzyme catalyses phosphonate(out) + ATP + H2O = phosphonate(in) + ADP + phosphate + H(+). Its function is as follows. Part of the ABC transporter complex PhnCDE involved in phosphonates import. Responsible for energy coupling to the transport system. In Pseudomonas entomophila (strain L48), this protein is Phosphonates import ATP-binding protein PhnC.